The following is a 985-amino-acid chain: Ankyrin repeat domain-containing protein 24 (985 aa).

5 ANK repeats span residues 52 to 81 (EGKSAFHLAAMRGAAGCLEVMLAQGADVMS), 85 to 114 (AGYNALHLAAKYGHPECLKQLLEASCVVDI), 118 to 147 (SGWTALHHAAAGGCLSCSKLLCSFKAHMNP), 151 to 180 (SGATPLIIAAQMCHTDLCRLLLQQGAATND), and 184 to 213 (QGRTALMLACEGGSPETVEVLLQGGAQLSI). Disordered stretches follow at residues 243–293 (RSSP…DRDA), 311–360 (IRGL…LGRE), 386–412 (QDEEGEMPDFPGADALMPKNQSPSAEE), 476–503 (YTEAMHSQQQQQEGEPPRAQEGEETAYQ), and 594–614 (DNAESEPVAAEDTGGKENPGM). Positions 291 to 488 (RDAYEEIVRL…AMHSQQQQQE (198 aa)) form a coiled coil. Composition is skewed to basic and acidic residues over residues 311–326 (IRGLEQHKERRRKEPL) and 349–360 (EKQEEKESLGRE).

Homodimer. Interacts (via C-terminal domain) with TRIOBP (via C-terminal domain) isoform 4; recruits TRIOBP isoform 4 to stereocilia rootlets. Expressed in vestibular hair bundles.

It localises to the cell membrane. The protein resides in the cell projection. The protein localises to the stereocilium. In terms of biological role, component of the stereocilia rootlet in hair cells of inner ear. Bridges the apical plasma membrane with the lower rootlet and maintains normal distribution of TRIOBP, thereby reinforcing stereocilia insertion points and organizing rootlets for hearing with long-term resilience. The protein is Ankyrin repeat domain-containing protein 24 (Ankrd24) of Mus musculus (Mouse).